We begin with the raw amino-acid sequence, 263 residues long: Receptor-transporting protein 1 (263 aa).

Topologically, residues 1–238 (MRIFRPWRLR…ETGSGWNFCS (238 aa)) are cytoplasmic. Residues 88–197 (ASGRFHCSWC…GEFCEACQEG (110 aa)) form a 3CxxC-type zinc finger. The helical transmembrane segment at 239 to 259 (IPWCLFWATVLLLIIYLQLSF) threads the bilayer. Residues 260-263 (RSSV) are Extracellular-facing.

It belongs to the TMEM7 family. In terms of assembly, interacts with olfactory receptors.

The protein localises to the cell membrane. In terms of biological role, specifically promotes functional cell surface expression of olfactory receptors, but not of other GPCRs. The protein is Receptor-transporting protein 1 (RTP1) of Macaca fascicularis (Crab-eating macaque).